Consider the following 364-residue polypeptide: Nicotinate-nucleotide--dimethylbenzimidazole phosphoribosyltransferase (364 aa).

Catalysis depends on glutamate 332, which acts as the Proton acceptor.

This sequence belongs to the CobT family.

It carries out the reaction 5,6-dimethylbenzimidazole + nicotinate beta-D-ribonucleotide = alpha-ribazole 5'-phosphate + nicotinate + H(+). It participates in nucleoside biosynthesis; alpha-ribazole biosynthesis; alpha-ribazole from 5,6-dimethylbenzimidazole: step 1/2. Its function is as follows. Catalyzes the synthesis of alpha-ribazole-5'-phosphate from nicotinate mononucleotide (NAMN) and 5,6-dimethylbenzimidazole (DMB). The protein is Nicotinate-nucleotide--dimethylbenzimidazole phosphoribosyltransferase of Salinispora tropica (strain ATCC BAA-916 / DSM 44818 / JCM 13857 / NBRC 105044 / CNB-440).